The sequence spans 58 residues: U8-ctenitoxin-Pr1a (58 aa).

5 disulfide bridges follow: cysteine 2/cysteine 16, cysteine 9/cysteine 22, cysteine 15/cysteine 40, cysteine 24/cysteine 38, and cysteine 48/cysteine 55.

As to expression, expressed by the venom gland.

It is found in the secreted. In terms of biological role, no toxic effects on mice at dose levels of 5 ug per mouse. May be toxic to insects. The polypeptide is U8-ctenitoxin-Pr1a (Phoneutria reidyi (Brazilian Amazonian armed spider)).